We begin with the raw amino-acid sequence, 420 residues long: MDKFRVQGPTRLSGEVTISGAKNAALPILFAALLAEEPVEIQNVPKLKDIDTTMKLLSQLGVKAERNGSVYLDASKVDIYCAPYELVKTMRASIWALGPLVARFGQGQVSLPGGCAIGARPVDLHITGLEQLGAEIKLEEGYVKASVDGRLKGAHIVMDKVSVGATVTIMSAATLATGTTVIENAAREPEIVDTANFLNTLGAKISGAGSDRITIEGVERLGGGVYRVLPDRIETGTFLVAGAISGGKVICRAAQPDTLDAVLAKLREAGAEIEVGDDWVSLDMHGKRPKAVSLRTAPHPGFPTDMQAQFSLLNLVAEGTGVITETIFENRFMHVPELARMGAHAEIESHTLICHGVEKLSSAQVMATDLRASASLVLAGCIAEGVTVVDRIYHIDRGYEHIEDKLIALGANIQRISGEE.

Residue 22 to 23 (KN) coordinates phosphoenolpyruvate. Position 91 (arginine 91) interacts with UDP-N-acetyl-alpha-D-glucosamine. The Proton donor role is filled by cysteine 115. Cysteine 115 bears the 2-(S-cysteinyl)pyruvic acid O-phosphothioketal mark. Residues 120–124 (RPVDL), 160–163 (KVSV), aspartate 305, and isoleucine 327 each bind UDP-N-acetyl-alpha-D-glucosamine.

It belongs to the EPSP synthase family. MurA subfamily.

It is found in the cytoplasm. It carries out the reaction phosphoenolpyruvate + UDP-N-acetyl-alpha-D-glucosamine = UDP-N-acetyl-3-O-(1-carboxyvinyl)-alpha-D-glucosamine + phosphate. It participates in cell wall biogenesis; peptidoglycan biosynthesis. Functionally, cell wall formation. Adds enolpyruvyl to UDP-N-acetylglucosamine. The protein is UDP-N-acetylglucosamine 1-carboxyvinyltransferase of Erwinia tasmaniensis (strain DSM 17950 / CFBP 7177 / CIP 109463 / NCPPB 4357 / Et1/99).